The sequence spans 530 residues: Ubiquitin carboxyl-terminal hydrolase 17-like protein 18 (530 aa).

In terms of domain architecture, USP spans A80 to K375. C89 serves as the catalytic Nucleophile. Residue H334 is the Proton acceptor of the active site. Basic and acidic residues-rich tracts occupy residues S382–R392 and D398–P413. 2 disordered regions span residues S382–C414 and R509–Q530. A compositionally biased stretch (basic residues) spans G510–R524.

This sequence belongs to the peptidase C19 family. USP17 subfamily.

The protein localises to the nucleus. It is found in the endoplasmic reticulum. The enzyme catalyses Thiol-dependent hydrolysis of ester, thioester, amide, peptide and isopeptide bonds formed by the C-terminal Gly of ubiquitin (a 76-residue protein attached to proteins as an intracellular targeting signal).. Its function is as follows. Deubiquitinating enzyme that removes conjugated ubiquitin from specific proteins to regulate different cellular processes that may include cell proliferation, progression through the cell cycle, apoptosis, cell migration, and the cellular response to viral infection. This chain is Ubiquitin carboxyl-terminal hydrolase 17-like protein 18 (USP17L18), found in Homo sapiens (Human).